We begin with the raw amino-acid sequence, 592 residues long: V-type ATP synthase alpha chain (592 aa).

Residue 233–240 (GPFGSGKT) coordinates ATP.

The protein belongs to the ATPase alpha/beta chains family.

It carries out the reaction ATP + H2O + 4 H(+)(in) = ADP + phosphate + 5 H(+)(out). Produces ATP from ADP in the presence of a proton gradient across the membrane. The V-type alpha chain is a catalytic subunit. This Clostridium botulinum (strain Loch Maree / Type A3) protein is V-type ATP synthase alpha chain.